The sequence spans 331 residues: Spondin-2 (331 aa).

An N-terminal signal peptide occupies residues 1-26 (MENPSPAAALGKALCALLLATLGAAG). Positions 31–221 (GESICSARAL…EITSSSPSHP (191 aa)) constitute a Spondin domain. Cys-35 and Cys-171 are disulfide-bonded. A divalent metal cation is bound at residue Glu-141. 3 residues coordinate Ca(2+): Asp-160, Asp-188, and Asp-192. The TSP type-1 domain occupies 277-331 (DCEVSLWSSWGLCGGHCGRLGTKSRTRYVRVQPANNGSPCPELEEEAECVPDNCV). Trp-283 carries C-linked (Man) tryptophan glycosylation.

As to quaternary structure, monomer. Interacts with integrin. As to expression, expressed in normal lung tissue but not in lung carcinoma cell lines.

The protein resides in the secreted. Its subcellular location is the extracellular space. It localises to the extracellular matrix. In terms of biological role, cell adhesion protein that promotes adhesion and outgrowth of hippocampal embryonic neurons. Binds directly to bacteria and their components and functions as an opsonin for macrophage phagocytosis of bacteria. Essential in the initiation of the innate immune response and represents a unique pattern-recognition molecule in the ECM for microbial pathogens. Binds bacterial lipopolysaccharide (LPS). The sequence is that of Spondin-2 (SPON2) from Homo sapiens (Human).